A 720-amino-acid chain; its full sequence is Fatty acid CoA ligase Acsl3 (720 aa).

The helical; Signal-anchor for type III membrane protein transmembrane segment at 21-41 threads the bilayer; that stretch reads ILLYFIHFIISLYTILTYIPF. Topologically, residues 42 to 720 are cytoplasmic; that stretch reads YFLCESKQEK…ADIERMYGRK (679 aa). S683 carries the phosphoserine modification.

It belongs to the ATP-dependent AMP-binding enzyme family. Mg(2+) serves as cofactor. As to expression, predominantly expressed in the brain, and to a much lesser extent, in lung, adrenal gland, kidney, small intestine, and adipose tissue but not detected in heart or liver.

The protein resides in the mitochondrion outer membrane. It localises to the peroxisome membrane. Its subcellular location is the microsome membrane. It is found in the endoplasmic reticulum membrane. The catalysed reaction is a long-chain fatty acid + ATP + CoA = a long-chain fatty acyl-CoA + AMP + diphosphate. It carries out the reaction (5Z,8Z,11Z,14Z)-eicosatetraenoate + ATP + CoA = (5Z,8Z,11Z,14Z)-eicosatetraenoyl-CoA + AMP + diphosphate. The enzyme catalyses a medium-chain fatty acid + ATP + CoA = a medium-chain fatty acyl-CoA + AMP + diphosphate. It catalyses the reaction 15-hydroxy-(5Z,8Z,11Z,13E)-eicosatetraenoate + ATP + CoA = 15-hydroxy-(5Z,8Z,11Z,13E)-eicosatetraenoyl-CoA + AMP + diphosphate. The catalysed reaction is 12-hydroxy-(5Z,8Z,10E,14Z)-eicosatetraenoate + ATP + CoA = 12-hydroxy-(5Z,8Z,10E,14Z)-eicosatetraenoyl-CoA + AMP + diphosphate. It carries out the reaction 5-hydroxy-(6E,8Z,11Z,14Z)-eicosatetraenoate + ATP + CoA = 5-hydroxy-(6E,8Z,11Z,14Z)-eicosatetraenoyl-CoA + AMP + diphosphate. The enzyme catalyses 14,15-epoxy-(5Z,8Z,11Z)-eicosatrienoate + ATP + CoA = 14,15-epoxy-(5Z,8Z,11Z)-eicosatrienoyl-CoA + AMP + diphosphate. It catalyses the reaction 11,12-epoxy-(5Z,8Z,14Z)-eicosatrienoate + ATP + CoA = 11,12-epoxy-(5Z,8Z,14Z)-eicosatrienoyl-CoA + AMP + diphosphate. The catalysed reaction is (E)-hexadec-2-enoate + ATP + CoA = (2E)-hexadecenoyl-CoA + AMP + diphosphate. It carries out the reaction hexadecanoate + ATP + CoA = hexadecanoyl-CoA + AMP + diphosphate. The enzyme catalyses tetradecanoate + ATP + CoA = tetradecanoyl-CoA + AMP + diphosphate. It catalyses the reaction dodecanoate + ATP + CoA = dodecanoyl-CoA + AMP + diphosphate. The catalysed reaction is octadecanoate + ATP + CoA = octadecanoyl-CoA + AMP + diphosphate. It carries out the reaction eicosanoate + ATP + CoA = eicosanoyl-CoA + AMP + diphosphate. The enzyme catalyses (9Z)-octadecenoate + ATP + CoA = (9Z)-octadecenoyl-CoA + AMP + diphosphate. It catalyses the reaction (9Z)-hexadecenoate + ATP + CoA = (9Z)-hexadecenoyl-CoA + AMP + diphosphate. The catalysed reaction is (9Z,12Z)-octadecadienoate + ATP + CoA = (9Z,12Z)-octadecadienoyl-CoA + AMP + diphosphate. It carries out the reaction (9Z,12Z,15Z)-octadecatrienoate + ATP + CoA = (9Z,12Z,15Z)-octadecatrienoyl-CoA + AMP + diphosphate. The enzyme catalyses (4Z,7Z,10Z,13Z,16Z,19Z)-docosahexaenoate + ATP + CoA = (4Z,7Z,10Z,13Z,16Z,19Z)-docosahexaenoyl-CoA + AMP + diphosphate. It catalyses the reaction (5Z,8Z,11Z,14Z,17Z)-eicosapentaenoate + ATP + CoA = (5Z,8Z,11Z,14Z,17Z)-eicosapentaenoyl-CoA + AMP + diphosphate. The catalysed reaction is a fatty acid + ATP + CoA = a fatty acyl-CoA + AMP + diphosphate. In terms of biological role, catalyzes the conversion of long-chain fatty acids to their active form acyl-CoA for both synthesis of cellular lipids, and degradation via beta-oxidation. ACSL3 is required for the incorporation of fatty acids into phosphatidylcholine, the major phospholipid located on the surface of VLDL (very low density lipoproteins). Has mainly an anabolic role in energy metabolism. Mediates hepatic lipogenesis. Preferentially uses myristate, laurate, arachidonate and eicosapentaenoate as substrates. Both isoforms exhibit the same level of activity. In Rattus norvegicus (Rat), this protein is Fatty acid CoA ligase Acsl3.